The primary structure comprises 318 residues: Very-long-chain 3-oxoacyl-CoA reductase-B (318 aa).

Residues 15 to 35 (FWYLGVVAATWWGLRAAWCLL) form a helical membrane-spanning segment. NADP(+) is bound at residue 54–83 (GKWAVVTGATDGIGKAYAEELARRGMNIVL). Transmembrane regions (helical) follow at residues 187-207 (GVVL…LTVY) and 281-301 (AITG…SMGM). Ser-194 contributes to the substrate binding site. Catalysis depends on Tyr-207, which acts as the Proton acceptor.

It belongs to the short-chain dehydrogenases/reductases (SDR) family. 17-beta-HSD 3 subfamily.

It localises to the endoplasmic reticulum membrane. The enzyme catalyses a very-long-chain (3R)-3-hydroxyacyl-CoA + NADP(+) = a very-long-chain 3-oxoacyl-CoA + NADPH + H(+). The catalysed reaction is 17beta-estradiol + NAD(+) = estrone + NADH + H(+). It carries out the reaction 17beta-estradiol + NADP(+) = estrone + NADPH + H(+). It functions in the pathway lipid metabolism; fatty acid biosynthesis. Its pathway is steroid biosynthesis; estrogen biosynthesis. Catalyzes the second of the four reactions of the long-chain fatty acids elongation cycle. This endoplasmic reticulum-bound enzymatic process, allows the addition of two carbons to the chain of long- and very long-chain fatty acids/VLCFAs per cycle. This enzyme has a 3-ketoacyl-CoA reductase activity, reducing 3-ketoacyl-CoA to 3-hydroxyacyl-CoA, within each cycle of fatty acid elongation. Thereby, it may participate in the production of VLCFAs of different chain lengths that are involved in multiple biological processes as precursors of membrane lipids and lipid mediators. May also catalyze the transformation of estrone (E1) into estradiol (E2) and play a role in estrogen formation. The protein is Very-long-chain 3-oxoacyl-CoA reductase-B (hsd17b12-b) of Xenopus laevis (African clawed frog).